The chain runs to 317 residues: Melanocyte-stimulating hormone receptor (317 aa).

At 1–37 (MPAQGSQRGLLGAVNFTPTATPHLRPAANQTGPQCLE) the chain is on the extracellular side. A glycan (N-linked (GlcNAc...) asparagine) is linked at N29. The chain crosses the membrane as a helical span at residues 38 to 63 (VSVPDGLFLCLGLVSLVENTLVVAAI). Over 64–72 (AKNRNLHSP) the chain is Cytoplasmic. The helical transmembrane segment at 73 to 93 (MYCFICCLALSDLLVSVSNLL) threads the bilayer. Over 94–118 (ETAVLLLLEVGALAAQATVVQQLGN) the chain is Extracellular. The chain crosses the membrane as a helical span at residues 119–140 (VIDVLICSSMVSSLCSLGAIAM). The Cytoplasmic portion of the chain corresponds to 141 to 163 (DRYISIFYALRYHSIVTLARARR). A helical membrane pass occupies residues 164-183 (AIAAVWAASILSSTLFITYY). Residues 184-191 (DRTAALLC) are Extracellular-facing. A helical membrane pass occupies residues 192–211 (LVVFFLAMLVLMALLYVHML). Residues 212-240 (IQACQHAQAIARLHKRQHPVQQGWGLKGA) are Cytoplasmic-facing. A helical membrane pass occupies residues 241–266 (ATLTILLGVFFLCWGPFFLHLTLIAV). The Extracellular segment spans residues 267–279 (CPQHPTCSCIFKN). The helical transmembrane segment at 280-300 (FRLFLALIICNTIVDPLIYAF) threads the bilayer. Topologically, residues 301–317 (RSQELRRTLKEVLLFSW) are cytoplasmic.

This sequence belongs to the G-protein coupled receptor 1 family. In terms of assembly, interacts with MGRN1, but does not undergo MGRN1-mediated ubiquitination; this interaction competes with GNAS-binding and thus inhibits agonist-induced cAMP production. Interacts with OPN3; the interaction results in a decrease in MC1R-mediated cAMP signaling and ultimately a decrease in melanin production in melanocytes.

It is found in the cell membrane. Receptor for MSH (alpha, beta and gamma) and ACTH. The activity of this receptor is mediated by G proteins which activate adenylate cyclase. Mediates melanogenesis, the production of eumelanin (black/brown) and phaeomelanin (red/yellow), via regulation of cAMP signaling in melanocytes. This chain is Melanocyte-stimulating hormone receptor (MC1R), found in Eulemur fulvus fulvus (Brown lemur).